The sequence spans 248 residues: mRNA-decapping protein OPG122 (248 aa).

The Nudix hydrolase domain maps to 45 to 227 (HKRVSVSAIL…IAKYALDTAK (183 aa)). Positions 125–147 (GGILKRGENVPECLSREIKEEVN) match the Nudix box motif. E132 provides a ligand contact to Mg(2+). Residue E141 is the Nucleophile of the active site. E145 lines the Mn(2+) pocket. Position 167 (D167) interacts with Mg(2+).

Belongs to the Nudix hydrolase family. Requires Mg(2+) as cofactor. Mn(2+) is required as a cofactor.

The protein localises to the host mitochondrion. Its function is as follows. Decapping enzyme that remove the protective 5'-cap from both host and viral mRNAs to commit transcripts for decay by the cellular exonuclease XRN1. Preferentially targets spliced mRNAs and since all viral genes are intronless, it preferentially targets host over viral transcripts. Acceleration of the turnover of cellular transcripts promotes the shutoff of host protein synthesis and therefore diminish the magnitude of antiviral response. In Variola virus (isolate Human/India/Ind3/1967) (VARV), this protein is mRNA-decapping protein OPG122 (OPG122).